A 548-amino-acid polypeptide reads, in one-letter code: Solute carrier family 22 member 7 (548 aa).

A helical membrane pass occupies residues 21–41 (VALLALPRVLLPLHFLLPIFL). Asn91 carries an N-linked (GlcNAc...) asparagine glycan. Transmembrane regions (helical) follow at residues 146–166 (AAST…GYLS), 180–200 (VSTL…MFAI), 204–224 (LTGS…LEWL), 234–254 (VLSS…GYLI), 259–279 (WLLL…WWVP), 346–366 (ISLC…GLSL), 376–397 (YQTQ…YLSV), 404–423 (LTQA…RLLV), 432–452 (TVLA…AYLF), 466–486 (MGLT…AALL), and 493–513 (LPKL…LLLP). Phe441 functions as the Important for glutamate counteranion efflux in the catalytic mechanism. A disordered region spans residues 522–548 (ETIQDVERKSAPTSLQEEEMPMKQVQN).

Belongs to the major facilitator (TC 2.A.1) superfamily. Organic cation transporter (TC 2.A.1.19) family. In terms of tissue distribution, mainly expressed in liver and kidney. In kidney, expressed in proximal tubular cells. Also expressed in pancreas, small intestine, spinal cord, lung, brain and heart. Expressed in fetal liver.

The protein localises to the basolateral cell membrane. Its subcellular location is the apical cell membrane. The protein resides in the cell membrane. It localises to the cytoplasm. It is found in the cytosol. It carries out the reaction orotate(out) + L-glutamate(in) = orotate(in) + L-glutamate(out). The catalysed reaction is 3',5'-cyclic GMP(in) = 3',5'-cyclic GMP(out). It catalyses the reaction GMP(in) = GMP(out). The enzyme catalyses 2'-deoxyguanosine(in) = 2'-deoxyguanosine(out). It carries out the reaction GDP(in) = GDP(out). The catalysed reaction is guanosine(in) = guanosine(out). It catalyses the reaction GTP(in) = GTP(out). The enzyme catalyses 3',5'-cyclic AMP(in) = 3',5'-cyclic AMP(out). It carries out the reaction creatinine(in) = creatinine(out). The catalysed reaction is prostaglandin E2(out) = prostaglandin E2(in). It catalyses the reaction 2-oxoglutarate(in) = 2-oxoglutarate(out). The enzyme catalyses glutarate(in) = glutarate(out). It carries out the reaction urate(out) = urate(in). The catalysed reaction is estrone 3-sulfate(out) = estrone 3-sulfate(in). It catalyses the reaction prostaglandin F2alpha(out) = prostaglandin F2alpha(in). In terms of biological role, functions as a Na(+)-independent bidirectional multispecific transporter. Contributes to the renal and hepatic elimination of endogenous organic compounds from the systemic circulation into the urine and bile, respectively. Capable of transporting a wide range of purine and pyrimidine nucleobases, nucleosides and nucleotides, with cGMP, 2'deoxyguanosine and GMP being the preferred substrates. Functions as a pH- and chloride-independent cGMP bidirectional facilitative transporter that can regulate both intracellular and extracellular levels of cGMP and may be involved in cGMP signaling pathways. Mediates orotate/glutamate bidirectional exchange and most likely display a physiological role in hepatic release of glutamate into the blood. Involved in renal secretion and possible reabsorption of creatinine. Able to uptake prostaglandin E2 (PGE2) and may contribute to PGE2 renal excretion. Also transports alpha-ketoglutarate and urate. Apart from the orotate/glutamate exchange, the counterions for the uptake of other SLC22A7/OAT2 substrates remain to be identified. Functionally, non functional transporter. Its function is as follows. Involved in the uptake of prostaglandin F2-alpha (PGF2-alpha). This Homo sapiens (Human) protein is Solute carrier family 22 member 7.